A 69-amino-acid polypeptide reads, in one-letter code: Protein SlyX homolog (69 aa).

The protein belongs to the SlyX family.

This Maricaulis maris (strain MCS10) (Caulobacter maris) protein is Protein SlyX homolog.